A 333-amino-acid chain; its full sequence is Glyceraldehyde-3-phosphate dehydrogenase (333 aa).

NAD(+)-binding positions include 12 to 13, Asp36, Arg80, and Ser120; that span reads RI. Residues 150–152, Thr181, Arg196, 209–210, and Arg232 each bind D-glyceraldehyde 3-phosphate; these read SCT and TG. Cys151 (nucleophile) is an active-site residue. An NAD(+)-binding site is contributed by Asn314.

Belongs to the glyceraldehyde-3-phosphate dehydrogenase family. In terms of assembly, homotetramer.

It localises to the cytoplasm. The catalysed reaction is D-glyceraldehyde 3-phosphate + phosphate + NAD(+) = (2R)-3-phospho-glyceroyl phosphate + NADH + H(+). Its pathway is carbohydrate degradation; glycolysis; pyruvate from D-glyceraldehyde 3-phosphate: step 1/5. Functionally, catalyzes the oxidative phosphorylation of glyceraldehyde 3-phosphate (G3P) to 1,3-bisphosphoglycerate (BPG) using the cofactor NAD. The first reaction step involves the formation of a hemiacetal intermediate between G3P and a cysteine residue, and this hemiacetal intermediate is then oxidized to a thioester, with concomitant reduction of NAD to NADH. The reduced NADH is then exchanged with the second NAD, and the thioester is attacked by a nucleophilic inorganic phosphate to produce BPG. This chain is Glyceraldehyde-3-phosphate dehydrogenase (gapB), found in Cereibacter sphaeroides (Rhodobacter sphaeroides).